A 198-amino-acid polypeptide reads, in one-letter code: Probable chemoreceptor glutamine deamidase CheD (198 aa).

It belongs to the CheD family.

It carries out the reaction L-glutaminyl-[protein] + H2O = L-glutamyl-[protein] + NH4(+). In terms of biological role, probably deamidates glutamine residues to glutamate on methyl-accepting chemotaxis receptors (MCPs), playing an important role in chemotaxis. This is Probable chemoreceptor glutamine deamidase CheD from Xanthomonas euvesicatoria pv. vesicatoria (strain 85-10) (Xanthomonas campestris pv. vesicatoria).